A 544-amino-acid chain; its full sequence is Secreted aspartic protease 9 (544 aa).

The signal sequence occupies residues 1-17 (MRLNSVALLSLVATALA). The segment at 31–50 (GESKDDLSPEDDSNPRFVKR) is disordered. The Peptidase A1 domain occupies 65–479 (YMATLKIGSN…DLDDYEVSLA (415 aa)). The active site involves Asp83. 83–85 (DTG) lines the pepstatin A pocket. Cys98 and Cys195 are oxidised to a cystine. N-linked (GlcNAc...) asparagine glycosylation is found at Asn212, Asn240, and Asn252. The active site involves Asp371. 371–375 (DTGST) contacts pepstatin A. Cys406 and Cys441 form a disulfide bridge. Asn422 and Asn499 each carry an N-linked (GlcNAc...) asparagine glycan. Residues 500-519 (SSGSGTTSSSGTSTSTSTRH) are disordered. Residue Ser520 is the site of GPI-anchor amidated serine attachment. The propeptide at 521–544 (AGSIISKPVYGLLLSLLISCYVLV) is removed in mature form. A helical membrane pass occupies residues 524–544 (IISKPVYGLLLSLLISCYVLV).

It belongs to the peptidase A1 family. In terms of assembly, monomer. In terms of processing, the GPI-anchor is attached to the protein in the endoplasmic reticulum and serves to target the protein to the cell surface. There, the glucosamine-inositol phospholipid moiety is cleaved off and the GPI-modified mannoprotein is covalently attached via its lipidless GPI glycan remnant to the 1,6-beta-glucan of the outer cell wall layer.

Its subcellular location is the cell membrane. The protein resides in the secreted. The protein localises to the cell wall. The catalysed reaction is Preferential cleavage at the carboxyl of hydrophobic amino acids, but fails to cleave 15-Leu-|-Tyr-16, 16-Tyr-|-Leu-17 and 24-Phe-|-Phe-25 of insulin B chain. Activates trypsinogen, and degrades keratin.. Its function is as follows. Secreted aspartic peptidases (SAPs) are a group of ten acidic hydrolases considered as key virulence factors. These enzymes supply the fungus with nutrient amino acids as well as are able to degrade the selected host's proteins involved in the immune defense. Moreover, acts toward human hemoglobin though limited proteolysis to generate a variety of antimicrobial hemocidins, enabling to compete with the other microorganisms of the same physiological niche using the microbicidal peptides generated from the host protein. Plays a key role in defense against host by cleaving histatin-5 (Hst 5), a peptide from human saliva that carries out fungicidal activity. The cleavage rate decreases in an order of SAP2 &gt; SAP9 &gt; SAP3 &gt; SAP7 &gt; SAP4 &gt; SAP1 &gt; SAP8. The first cleavage occurs between residues 'Lys-17' and 'His-18' of Hst 5, giving DSHAKRHHGYKRKFHEK and HHSHRGY peptides. Simultaneously, the DSHAKRHHGYKRK peptide is also formed. Further fragmentation by SAP9 results in FHEK product. The polypeptide is Secreted aspartic protease 9 (Candida albicans (strain SC5314 / ATCC MYA-2876) (Yeast)).